A 346-amino-acid chain; its full sequence is MSFRTIEWRDNKVIMIDQTRLPAEEVYNEYTDFQSVAQAIRGMVVRGAPAIGIAAAMGVALGAREIIADSFDTFYRQLENVCDVIGRTRPTAVNLFWGLERMKRVALQHKELDLNSIRELLKAEAISIETEDLAICKEIGRHGAALVKEGASILTHCNAGGLATAGYGTALGVIRGAHEAGKGIRVFADETRPWLQGARLTAWELMKDSIPVTLISDNMAGWLMRTGQIDFCVVGADRIAANGDTANKIGTYSVAVLAKENRIPFYVAAPISTLDLKLANGDLIPIEERASEEVTQIKGIQIAPEGVKVRNPAFDVTPARYITGIITEKGVVRGDYERELKALVGQ.

Substrate-binding positions include Arg-46–Ala-48, Arg-89, and Gln-196. Asp-237 (proton donor) is an active-site residue. Asn-247–Lys-248 contacts substrate.

Belongs to the eIF-2B alpha/beta/delta subunits family. MtnA subfamily.

It carries out the reaction 5-(methylsulfanyl)-alpha-D-ribose 1-phosphate = 5-(methylsulfanyl)-D-ribulose 1-phosphate. It participates in amino-acid biosynthesis; L-methionine biosynthesis via salvage pathway; L-methionine from S-methyl-5-thio-alpha-D-ribose 1-phosphate: step 1/6. In terms of biological role, catalyzes the interconversion of methylthioribose-1-phosphate (MTR-1-P) into methylthioribulose-1-phosphate (MTRu-1-P). The sequence is that of Methylthioribose-1-phosphate isomerase from Geobacter sp. (strain M21).